Consider the following 207-residue polypeptide: Ribonuclease HII (207 aa).

The RNase H type-2 domain occupies 10 to 199 (RLIAGVDEVG…VRNALLDAEL (190 aa)). The a divalent metal cation site is built by Asp-16, Glu-17, and Asp-108.

This sequence belongs to the RNase HII family. Mn(2+) is required as a cofactor. Requires Mg(2+) as cofactor.

It is found in the cytoplasm. It carries out the reaction Endonucleolytic cleavage to 5'-phosphomonoester.. In terms of biological role, endonuclease that specifically degrades the RNA of RNA-DNA hybrids. This Erwinia tasmaniensis (strain DSM 17950 / CFBP 7177 / CIP 109463 / NCPPB 4357 / Et1/99) protein is Ribonuclease HII.